The chain runs to 227 residues: Guanylate kinase (227 aa).

The 179-residue stretch at 21–199 folds into the Guanylate kinase-like domain; it reads GNLFMVVAPS…ALAELECIVA (179 aa). 28 to 35 is a binding site for ATP; the sequence is APSGAGKS.

Belongs to the guanylate kinase family.

Its subcellular location is the cytoplasm. It catalyses the reaction GMP + ATP = GDP + ADP. Functionally, essential for recycling GMP and indirectly, cGMP. The chain is Guanylate kinase from Burkholderia thailandensis (strain ATCC 700388 / DSM 13276 / CCUG 48851 / CIP 106301 / E264).